Here is a 519-residue protein sequence, read N- to C-terminus: Dolichol kinase (519 aa).

Topologically, residues 1 to 47 (MVAIIPHASFTTIKLTQKTEGSQMPTEEICKINMRTRKFDVGGNSRD) are cytoplasmic. Residues 48–68 (FECFYSNFVQTVILLGTFFYC) traverse the membrane as a helical segment. Over 69–88 (VERLQPWSIVTADISYKQIF) the chain is Lumenal. A helical transmembrane segment spans residues 89–109 (VNVFVVCLIMVGLIFTKYWQH). The Cytoplasmic portion of the chain corresponds to 110 to 118 (GYKSLPKFD). The helical transmembrane segment at 119-139 (TIYSLYLPFMVSLLFDTSSTV) threads the bilayer. The Lumenal portion of the chain corresponds to 140-151 (INTILILSVLNS). The chain crosses the membrane as a helical span at residues 152–172 (YRWRTQLVVIILQLCLIFFNF). Residues 173–181 (EAGDRLKNI) are Cytoplasmic-facing. The chain crosses the membrane as a helical span at residues 182 to 203 (ISIVINSLLSLILKYIGQLKSL). Residues 204–223 (DNIDSNLFSILLTNILYVSE) lie on the Lumenal side of the membrane. Residues 224 to 244 (AGTVHFRILKGIILALTTIIS) form a helical membrane-spanning segment. Residues 245 to 253 (INYVLKKVM) lie on the Cytoplasmic side of the membrane. A helical transmembrane segment spans residues 254 to 274 (HFKPFMLSISFAIGLPLFANT). Residues 275-294 (FIHLEDGENPLLWLVKYILE) lie on the Lumenal side of the membrane. A helical membrane pass occupies residues 295 to 315 (STIRQKILFAWSSILILSIPS). The Cytoplasmic portion of the chain corresponds to 316–326 (ILIEKDSLSLN). Residues 327 to 347 (TSRKLWHFIIFLLIIPSFQMD) traverse the membrane as a helical segment. The Lumenal segment spans residues 348-349 (SN). A helical membrane pass occupies residues 350 to 370 (FVKIALSGTIPVFLSIEYIRF). At 371 to 394 (QNLPPLGSAIELQLRRFADDRDHS) the chain is on the cytoplasmic side. The chain crosses the membrane as a helical span at residues 395-415 (GPLIISYLYLLFGISTPLLMN). Residues 416–417 (NS) lie on the Lumenal side of the membrane. Residues 418–438 (PMGLIGLGIGDSLASIIGKRY) traverse the membrane as a helical segment. The Cytoplasmic portion of the chain corresponds to 439–449 (GRIRWKGTQKT). Residues 450–470 (LEGTLAFIVTSFIVCLVLLRF) traverse the membrane as a helical segment. The Lumenal segment spans residues 471-472 (DK). The chain crosses the membrane as a helical span at residues 473–493 (AAIFNHLTTLQLLTLCTLSGV). At 494 to 519 (LEGNSVLNDNILIPAFMMICEKLITL) the chain is on the cytoplasmic side.

Belongs to the polyprenol kinase family.

It localises to the endoplasmic reticulum membrane. It catalyses the reaction a di-trans,poly-cis-dolichol + CTP = a di-trans,poly-cis-dolichyl phosphate + CDP + H(+). Its pathway is protein modification; protein glycosylation. Functionally, catalyzes CTP-mediated phosphorylation of dolichol, the terminal step in de novo dolichyl monophosphate (Dol-P) biosynthesis. Dol-P is a lipid carrier essential for the synthesis of N-linked and O-linked oligosaccharides and for GPI anchors. This Saccharomyces cerevisiae (strain ATCC 204508 / S288c) (Baker's yeast) protein is Dolichol kinase (SEC59).